The following is a 90-amino-acid chain: Small ribosomal subunit protein bS20 (90 aa).

The protein belongs to the bacterial ribosomal protein bS20 family.

In terms of biological role, binds directly to 16S ribosomal RNA. The polypeptide is Small ribosomal subunit protein bS20 (Francisella tularensis subsp. holarctica (strain FTNF002-00 / FTA)).